The sequence spans 360 residues: Phospho-N-acetylmuramoyl-pentapeptide-transferase (360 aa).

10 helical membrane-spanning segments follow: residues 25–45 (RGIL…PWMI), 73–93 (TMGG…WADL), 97–117 (YVWV…VDDY), 142–162 (VGAA…TLII), 168–188 (ASIP…VGSS), 199–219 (GLAI…CYLS), 236–256 (AGEL…FLWF), 263–283 (VFMG…IAVI), 288–308 (IVLF…VIQV), and 338–358 (VIVR…ATLK).

The protein belongs to the glycosyltransferase 4 family. MraY subfamily. The cofactor is Mg(2+).

It is found in the cell inner membrane. It catalyses the reaction UDP-N-acetyl-alpha-D-muramoyl-L-alanyl-gamma-D-glutamyl-meso-2,6-diaminopimeloyl-D-alanyl-D-alanine + di-trans,octa-cis-undecaprenyl phosphate = di-trans,octa-cis-undecaprenyl diphospho-N-acetyl-alpha-D-muramoyl-L-alanyl-D-glutamyl-meso-2,6-diaminopimeloyl-D-alanyl-D-alanine + UMP. Its pathway is cell wall biogenesis; peptidoglycan biosynthesis. Functionally, catalyzes the initial step of the lipid cycle reactions in the biosynthesis of the cell wall peptidoglycan: transfers peptidoglycan precursor phospho-MurNAc-pentapeptide from UDP-MurNAc-pentapeptide onto the lipid carrier undecaprenyl phosphate, yielding undecaprenyl-pyrophosphoryl-MurNAc-pentapeptide, known as lipid I. The sequence is that of Phospho-N-acetylmuramoyl-pentapeptide-transferase from Pseudomonas fluorescens (strain SBW25).